Consider the following 365-residue polypeptide: Succinyl-diaminopimelate desuccinylase (365 aa).

H64 contributes to the Zn(2+) binding site. D66 is an active-site residue. Zn(2+) is bound at residue D95. The active-site Proton acceptor is E125. 3 residues coordinate Zn(2+): E126, E154, and H339.

The protein belongs to the peptidase M20A family. DapE subfamily. In terms of assembly, homodimer. Zn(2+) is required as a cofactor. The cofactor is Co(2+).

It catalyses the reaction N-succinyl-(2S,6S)-2,6-diaminopimelate + H2O = (2S,6S)-2,6-diaminopimelate + succinate. It functions in the pathway amino-acid biosynthesis; L-lysine biosynthesis via DAP pathway; LL-2,6-diaminopimelate from (S)-tetrahydrodipicolinate (succinylase route): step 3/3. In terms of biological role, catalyzes the hydrolysis of N-succinyl-L,L-diaminopimelic acid (SDAP), forming succinate and LL-2,6-diaminopimelate (DAP), an intermediate involved in the bacterial biosynthesis of lysine and meso-diaminopimelic acid, an essential component of bacterial cell walls. The polypeptide is Succinyl-diaminopimelate desuccinylase (Campylobacter curvus (strain 525.92)).